The primary structure comprises 436 residues: GTPase Der (436 aa).

EngA-type G domains lie at 4 to 167 and 176 to 351; these read PIVA…DEET and IRLS…ENHK. GTP-binding positions include 10-17, 57-61, 119-122, 182-189, 229-233, and 294-297; these read GRPNVGKS, DTGGI, NKVD, DTAGM, and NKWD. In terms of domain architecture, KH-like spans 352–436; it reads KRVQSSTLNE…PIHIIPRRRN (85 aa).

The protein belongs to the TRAFAC class TrmE-Era-EngA-EngB-Septin-like GTPase superfamily. EngA (Der) GTPase family. As to quaternary structure, associates with the 50S ribosomal subunit.

In terms of biological role, GTPase that plays an essential role in the late steps of ribosome biogenesis. The chain is GTPase Der from Staphylococcus haemolyticus (strain JCSC1435).